We begin with the raw amino-acid sequence, 888 residues long: Isoleucine--tRNA ligase (888 aa).

Residues 61–71 (PYANGSIHIGH) carry the 'HIGH' region motif. L-isoleucyl-5'-AMP is bound at residue Glu551. A 'KMSKS' region motif is present at residues 592–596 (KMSKQ). Residue Lys595 participates in ATP binding. Residues Cys862, Cys865, Cys879, and Cys882 each coordinate Zn(2+).

Belongs to the class-I aminoacyl-tRNA synthetase family. IleS type 1 subfamily. In terms of assembly, monomer. It depends on Zn(2+) as a cofactor.

The protein localises to the cytoplasm. The enzyme catalyses tRNA(Ile) + L-isoleucine + ATP = L-isoleucyl-tRNA(Ile) + AMP + diphosphate. Catalyzes the attachment of isoleucine to tRNA(Ile). As IleRS can inadvertently accommodate and process structurally similar amino acids such as valine, to avoid such errors it has two additional distinct tRNA(Ile)-dependent editing activities. One activity is designated as 'pretransfer' editing and involves the hydrolysis of activated Val-AMP. The other activity is designated 'posttransfer' editing and involves deacylation of mischarged Val-tRNA(Ile). The chain is Isoleucine--tRNA ligase from Mycoplasmopsis pulmonis (strain UAB CTIP) (Mycoplasma pulmonis).